The sequence spans 570 residues: Structure-specific endonuclease subunit EME1 (570 aa).

Positions 1–12 are enriched in low complexity; the sequence is MALKKSSPSLDS. The tract at residues 1-42 is disordered; the sequence is MALKKSSPSLDSGDSDSEELPTFAFLKKEPSSTKRRQPEREE. Ser12 and Ser15 each carry phosphoserine. Residues 26 to 42 are compositionally biased toward basic and acidic residues; it reads LKKEPSSTKRRQPEREE. Phosphoserine occurs at positions 84, 85, and 87. Lys103 is covalently cross-linked (Glycyl lysine isopeptide (Lys-Gly) (interchain with G-Cter in SUMO2)). Phosphoserine is present on residues Ser111 and Ser117. Residues Lys136 and Lys141 each participate in a glycyl lysine isopeptide (Lys-Gly) (interchain with G-Cter in SUMO2) cross-link. Thr150 carries the phosphothreonine modification. 2 disordered regions span residues 187 to 233 and 372 to 400; these read KTNS…ERKN and AQNPPRRGKQGANKQTKKQQQRQPEASIG. Over residues 220–233 the composition is skewed to basic and acidic residues; the sequence is RQKESTLRRQERKN. Residues 250-456 form a nuclease-like domain; forms the post-nick DNA binding interface and is involved in DNA recognition and bending region; the sequence is KHIIVVLDPV…PFKKLRDETT (207 aa). The tract at residues 476–570 is helix-hairpin-helix (2HhH); forms the pre-nick DNA binding interface and is involved in DNA recognition and bending; it reads RGLALVWRRQ…QPHLSLDSAD (95 aa).

Belongs to the EME1/MMS4 family. As to quaternary structure, part of the heterodimeric MUS81-EME1 complex.

The protein resides in the nucleus. It is found in the nucleolus. Functionally, non-catalytic subunit of the structure-specific, heterodimeric DNA endonuclease MUS81-EME1 which is involved in the maintenance of genome stability. In the complex, EME1 is required for DNA cleavage, participating in DNA recognition and bending. MUS81-EME1 cleaves 3'-flaps and nicked Holliday junctions, and exhibit limited endonuclease activity with 5' flaps and nicked double-stranded DNAs. Active during prometaphase, MUS81-EME1 resolves mitotic recombination intermediates, including Holliday junctions, which form during homologous recombination. This chain is Structure-specific endonuclease subunit EME1, found in Homo sapiens (Human).